Consider the following 276-residue polypeptide: Type 2 phosphatidylinositol 4,5-bisphosphate 4-phosphatase (276 aa).

Residues 1–10 are compositionally biased toward basic and acidic residues; the sequence is MAADGIDERS. The segment at 1–27 is disordered; it reads MAADGIDERSPLISPSSGNVTPTAPPY. The span at 13-27 shows a compositional bias: polar residues; sequence ISPSSGNVTPTAPPY. Cys106 is a catalytic residue. Positions 106-112 match the CX5R motif motif; sequence CKDISRR. The next 2 helical transmembrane spans lie at 211 to 231 and 246 to 266; these read CCTY…LTVG and WAVA…WGAI.

The protein resides in the late endosome membrane. Its subcellular location is the lysosome membrane. It carries out the reaction a 1,2-diacyl-sn-glycero-3-phospho-(1D-myo-inositol-4,5-bisphosphate) + H2O = a 1,2-diacyl-sn-glycero-3-phospho-(1D-myo-inositol-5-phosphate) + phosphate. Its function is as follows. Catalyzes the hydrolysis of phosphatidylinositol-4,5-bisphosphate (PtdIns-4,5-P2) to phosphatidylinositol-4-phosphate (PtdIns-4-P). The sequence is that of Type 2 phosphatidylinositol 4,5-bisphosphate 4-phosphatase (pip4p2) from Xenopus tropicalis (Western clawed frog).